Reading from the N-terminus, the 180-residue chain is Putative adenylate kinase (180 aa).

ATP-binding residues include glycine 10, glycine 12, lysine 13, threonine 14, and threonine 15. The segment at 30–50 (NLRDFALEKGIGEVKGDELEV) is NMP. Residues 99–109 (ERGYSKDKIGE) are LID. Arginine 100 and lysine 138 together coordinate ATP.

It belongs to the adenylate kinase family. AK6 subfamily. As to quaternary structure, interacts with uS11. Not a structural component of 40S pre-ribosomes, but transiently interacts with them by binding to uS11.

It catalyses the reaction AMP + ATP = 2 ADP. The enzyme catalyses ATP + H2O = ADP + phosphate + H(+). Broad-specificity nucleoside monophosphate (NMP) kinase that catalyzes the reversible transfer of the terminal phosphate group between nucleoside triphosphates and monophosphates. Also has ATPase activity. Involved in the late maturation steps of the 30S ribosomal particles, specifically 16S rRNA maturation. While NMP activity is not required for ribosome maturation, ATPase activity is. Associates transiently with small ribosomal subunit protein uS11. ATP hydrolysis breaks the interaction with uS11. May temporarily remove uS11 from the ribosome to enable a conformational change of the ribosomal RNA that is needed for the final maturation step of the small ribosomal subunit. In Pyrococcus furiosus (strain ATCC 43587 / DSM 3638 / JCM 8422 / Vc1), this protein is Putative adenylate kinase.